The sequence spans 443 residues: MRRIPRIPSTASALCSSSSSVASTSAAPLRTLRAAADSSSICQSCSFSTQTSATRNRVWQNTVQTQRRCASTVTETTPEAPVAAAAAETATESTETVEQQRKRKGGFFETQRQVNLVLPGQPTRADAPEKIRDPNYEPATSGAGLQEIGGMSDWWSKPEHFRDGGKQFEYQGFAPQEKITDPRLLKVILRRALAEGLALKKFGANPKNPADMASIIGNGDHWQRTVSVEMCRGENGELSLKNESDLQKVWILMRNAAEKTYYQREWQEEINRLRSLGEKEQAKQLLEEGKKLGYRLKSEEGSLVKLTVDEAVELRKSWNNDWKEAIIRDPVVKFYAAKRIQKMTGHILSDGKLTSIQTVANFMDALVTPPKPKKLAEQIEQSSILPELPNVKVYPRRVTPVDKERMVGRWKVIQKELQKRELPVLGTGNHGKYVELKWLGSKQ.

A disordered region spans residues 121–145; the sequence is QPTRADAPEKIRDPNYEPATSGAGL. Residues 126-135 are compositionally biased toward basic and acidic residues; the sequence is DAPEKIRDPN.

This sequence belongs to the mitochondrion-specific ribosomal protein mL50 family. Component of the mitochondrial large ribosomal subunit (mt-LSU). Mature N.crassa 74S mitochondrial ribosomes consist of a small (37S) and a large (54S) subunit. The 37S small subunit contains a 16S ribosomal RNA (16S mt-rRNA) and 32 different proteins. The 54S large subunit contains a 23S rRNA (23S mt-rRNA) and 42 different proteins.

The protein resides in the mitochondrion. Component of the mitochondrial ribosome (mitoribosome), a dedicated translation machinery responsible for the synthesis of mitochondrial genome-encoded proteins, including at least some of the essential transmembrane subunits of the mitochondrial respiratory chain. The mitoribosomes are attached to the mitochondrial inner membrane and translation products are cotranslationally integrated into the membrane. This Neurospora crassa (strain ATCC 24698 / 74-OR23-1A / CBS 708.71 / DSM 1257 / FGSC 987) protein is Large ribosomal subunit protein mL50 (mrpl13).